A 277-amino-acid polypeptide reads, in one-letter code: Bis(5'-nucleosyl)-tetraphosphatase, symmetrical (277 aa).

The protein belongs to the Ap4A hydrolase family.

It carries out the reaction P(1),P(4)-bis(5'-adenosyl) tetraphosphate + H2O = 2 ADP + 2 H(+). Its function is as follows. Hydrolyzes diadenosine 5',5'''-P1,P4-tetraphosphate to yield ADP. This Chromobacterium violaceum (strain ATCC 12472 / DSM 30191 / JCM 1249 / CCUG 213 / NBRC 12614 / NCIMB 9131 / NCTC 9757 / MK) protein is Bis(5'-nucleosyl)-tetraphosphatase, symmetrical.